The sequence spans 523 residues: 2-isopropylmalate synthase (523 aa).

In terms of domain architecture, Pyruvate carboxyltransferase spans 5–267; it reads VIIFDTTLRD…HTNINHHEIW (263 aa). Mn(2+) is bound by residues D14, H202, H204, and N238. Residues 392 to 523 are regulatory domain; that stretch reads RLDYFSVQSG…QNKENNKETV (132 aa).

Belongs to the alpha-IPM synthase/homocitrate synthase family. LeuA type 1 subfamily. In terms of assembly, homodimer. The cofactor is Mn(2+).

Its subcellular location is the cytoplasm. It catalyses the reaction 3-methyl-2-oxobutanoate + acetyl-CoA + H2O = (2S)-2-isopropylmalate + CoA + H(+). Its pathway is amino-acid biosynthesis; L-leucine biosynthesis; L-leucine from 3-methyl-2-oxobutanoate: step 1/4. Catalyzes the condensation of the acetyl group of acetyl-CoA with 3-methyl-2-oxobutanoate (2-ketoisovalerate) to form 3-carboxy-3-hydroxy-4-methylpentanoate (2-isopropylmalate). The protein is 2-isopropylmalate synthase of Salmonella newport (strain SL254).